Here is a 196-residue protein sequence, read N- to C-terminus: uncharacterized protein (196 aa).

This sequence belongs to the CDP-alcohol phosphatidyltransferase class-I family.

This is an uncharacterized protein from Aquifex aeolicus (strain VF5).